The following is a 668-amino-acid chain: Type II methyltransferase M.MwoI (668 aa).

Belongs to the N(4)/N(6)-methyltransferase family. N(4) subfamily.

It carries out the reaction a 2'-deoxycytidine in DNA + S-adenosyl-L-methionine = an N(4)-methyl-2'-deoxycytidine in DNA + S-adenosyl-L-homocysteine + H(+). Functionally, a beta subtype methylase, recognizes the double-stranded DNA sequence 5'-GCNNNNNNNGC-3', methylates C-2 on both strands, and protects the DNA from cleavage by the MwoI endonuclease. This chain is Type II methyltransferase M.MwoI, found in Methanothermobacter wolfeii (Methanobacterium wolfei).